Consider the following 771-residue polypeptide: Kojibiose phosphorylase (771 aa).

358–359 (WD) lines the substrate pocket. The active-site Proton donor is the glutamate 498. 611–612 (KQ) is a substrate binding site.

Belongs to the glycosyl hydrolase 65 family.

It catalyses the reaction kojibiose + phosphate = beta-D-glucose 1-phosphate + D-glucose. Functionally, catalyzes the reversible phosphorolysis of kojibiose into beta-D-glucose 1-phosphate (Glc1P) and D-glucose. This is Kojibiose phosphorylase (kojP) from Caldanaerobacter subterraneus subsp. tengcongensis (strain DSM 15242 / JCM 11007 / NBRC 100824 / MB4) (Thermoanaerobacter tengcongensis).